The sequence spans 173 residues: Photosystem I assembly protein Ycf3 (173 aa).

TPR repeat units follow at residues 35–68 (AFVY…EEDT), 72–105 (GYIL…NPRL), and 120–153 (GEKA…APNN).

The protein belongs to the Ycf3 family.

The protein resides in the cellular thylakoid membrane. Its function is as follows. Essential for the assembly of the photosystem I (PSI) complex. May act as a chaperone-like factor to guide the assembly of the PSI subunits. This Trichormus variabilis (strain ATCC 29413 / PCC 7937) (Anabaena variabilis) protein is Photosystem I assembly protein Ycf3.